Here is a 165-residue protein sequence, read N- to C-terminus: Sporulation thiol-disulfide oxidoreductase A (165 aa).

The N-terminal stretch at 1–26 (MLTKRLLTIYIMLLGLIAWFPGAAQA) is a signal peptide. A Thioredoxin domain is found at 27-165 (EEKQPAVPAV…AEQLKEWTEE (139 aa)). C65 and C68 are disulfide-bonded.

This sequence belongs to the thioredoxin family.

Its subcellular location is the spore outer membrane. In terms of biological role, thiol-disulfide oxidoreductase with a reductive function, involved in spore cortex synthesis. It could be involved either in breaking disulfide bonds in cortex components or in proteins that are important for cortex synthesis, or in thiol/disulfide bond interchange. In Bacillus subtilis (strain 168), this protein is Sporulation thiol-disulfide oxidoreductase A (stoA).